The sequence spans 382 residues: Homoserine O-acetyltransferase (382 aa).

The segment at 1–20 is disordered; the sequence is MSTDQSPCPSATGAELLPPP. The AB hydrolase-1 domain maps to 59 to 363; the sequence is NVVLVEHALT…RDGHDGFLTE (305 aa). Serine 164 (nucleophile) is an active-site residue. Arginine 234 is a binding site for substrate. Residues aspartate 327 and histidine 357 contribute to the active site. Aspartate 358 contacts substrate.

This sequence belongs to the AB hydrolase superfamily. MetX family. In terms of assembly, homodimer.

Its subcellular location is the cytoplasm. The catalysed reaction is L-homoserine + acetyl-CoA = O-acetyl-L-homoserine + CoA. Its pathway is amino-acid biosynthesis; L-methionine biosynthesis via de novo pathway; O-acetyl-L-homoserine from L-homoserine: step 1/1. Transfers an acetyl group from acetyl-CoA to L-homoserine, forming acetyl-L-homoserine. The polypeptide is Homoserine O-acetyltransferase (Nocardia farcinica (strain IFM 10152)).